A 352-amino-acid polypeptide reads, in one-letter code: Heat-inducible transcription repressor HrcA (352 aa).

It belongs to the HrcA family.

Negative regulator of class I heat shock genes (grpE-dnaK-dnaJ and groELS operons). Prevents heat-shock induction of these operons. The polypeptide is Heat-inducible transcription repressor HrcA (Latilactobacillus sakei subsp. sakei (strain 23K) (Lactobacillus sakei subsp. sakei)).